A 283-amino-acid polypeptide reads, in one-letter code: Cyclin-C (283 aa).

Positions 20–151 (DLLKERQKDL…LLELMDCCLI (132 aa)) constitute a Cyclin N-terminal domain. Residues 252–283 (TILSKMPKPKPPPNSEGEQGPNGSQNSSYSQS) form a disordered region. A compositionally biased stretch (polar residues) spans 272 to 283 (PNGSQNSSYSQS). Serine 275 is modified (phosphoserine).

Belongs to the cyclin family. Cyclin C subfamily. In terms of assembly, component of the Mediator complex, which is composed of MED1, MED4, MED6, MED7, MED8, MED9, MED10, MED11, MED12, MED13, MED13L, MED14, MED15, MED16, MED17, MED18, MED19, MED20, MED21, MED22, MED23, MED24, MED25, MED26, MED27, MED29, MED30, MED31, CCNC, CDK8 and CDC2L6/CDK11. The MED12, MED13, CCNC and CDK8 subunits form a distinct module termed the CDK8 module. Mediator containing the CDK8 module is less active than Mediator lacking this module in supporting transcriptional activation. Individual preparations of the Mediator complex lacking one or more distinct subunits have been variously termed ARC, CRSP, DRIP, PC2, SMCC and TRAP. The cylin/CDK pair formed by CCNC/CDK8 also associates with the large subunit of RNA polymerase II.

It localises to the nucleus. Its function is as follows. Component of the Mediator complex, a coactivator involved in regulated gene transcription of nearly all RNA polymerase II-dependent genes. Mediator functions as a bridge to convey information from gene-specific regulatory proteins to the basal RNA polymerase II transcription machinery. Mediator is recruited to promoters by direct interactions with regulatory proteins and serves as a scaffold for the assembly of a functional preinitiation complex with RNA polymerase II and the general transcription factors. Binds to and activates cyclin-dependent kinase CDK8 that phosphorylates the CTD (C-terminal domain) of the large subunit of RNA polymerase II (RNAp II), which may inhibit the formation of a transcription initiation complex. The chain is Cyclin-C (Ccnc) from Mus musculus (Mouse).